The sequence spans 88 residues: Putative defensin-like protein 228 (88 aa).

A signal peptide spans 1–27 (MMKSAILLMVSCVFMFLVVSYIQDVEG). Intrachain disulfides connect cysteine 32/cysteine 88, cysteine 42/cysteine 66, cysteine 50/cysteine 82, and cysteine 64/cysteine 84.

It belongs to the DEFL family.

It localises to the secreted. This Arabidopsis thaliana (Mouse-ear cress) protein is Putative defensin-like protein 228 (SCRL3).